We begin with the raw amino-acid sequence, 143 residues long: Transcriptional regulator MraZ (143 aa).

2 SpoVT-AbrB domains span residues 5–47 (TYTP…PKEE) and 76–119 (ADEQ…DAQA).

This sequence belongs to the MraZ family. Forms oligomers.

The protein resides in the cytoplasm. It localises to the nucleoid. The polypeptide is Transcriptional regulator MraZ (Corynebacterium glutamicum (strain R)).